Here is a 233-residue protein sequence, read N- to C-terminus: Large ribosomal subunit protein uL1 (233 aa).

This sequence belongs to the universal ribosomal protein uL1 family. Part of the 50S ribosomal subunit.

Functionally, binds directly to 23S rRNA. The L1 stalk is quite mobile in the ribosome, and is involved in E site tRNA release. In terms of biological role, protein L1 is also a translational repressor protein, it controls the translation of the L11 operon by binding to its mRNA. The protein is Large ribosomal subunit protein uL1 of Pelobacter propionicus (strain DSM 2379 / NBRC 103807 / OttBd1).